A 1287-amino-acid polypeptide reads, in one-letter code: SCL-interrupting locus protein (1287 aa).

Position 1 is an N-acetylmethionine (Met1). The interaction with RBM14 stretch occupies residues 1–1018 (MEPIYPFARP…IDSPTKVKKN (1018 aa)). An interaction with CPAP region spans residues 231-781 (YKYGYLTMDE…VSVEAQSSPG (551 aa)). Disordered stretches follow at residues 378–417 (RSSQ…SQKI) and 508–533 (PPAY…PSHD). A Phosphoserine modification is found at Ser395. Over residues 517 to 529 (HTRNSIKPSSHNG) the composition is skewed to polar residues. The interval 584 to 779 (PMELQIPTPP…ELVSVEAQSS (196 aa)) is PIN1-binding. Phosphoserine occurs at positions 753, 779, and 1135.

Homodimer. Interacts with PIN1 via its WW domain. This interaction is dependent on STIL mitotic phosphorylation. Interacts with CPAP. Interacts with RBM14 and this interaction interferes with the interaction of STIL with CPAP. Forms a complex with CPAP and SASS6. Interacts (via N-terminus) with CEP85; this interaction is essential for efficient centriolar targeting of STIL and subsequent PLK4 activation. In terms of processing, ubiquitinated. Post-translationally, phosphorylated following the activation of the mitotic checkpoint. In terms of tissue distribution, expressed in all hematopoietic tissues and cell lines. Highly expressed in a variety of tumors characterized by increased mitotic activity with highest expression in lung cancer.

Its subcellular location is the cytoplasm. The protein resides in the cytosol. The protein localises to the cytoskeleton. It localises to the microtubule organizing center. It is found in the centrosome. Its subcellular location is the centriole. The protein resides in the cell cortex. Immediate-early gene. Plays an important role in embryonic development as well as in cellular growth and proliferation; its long-term silencing affects cell survival and cell cycle distribution as well as decreases CDK1 activity correlated with reduced phosphorylation of CDK1. Plays a role as a positive regulator of the sonic hedgehog pathway, acting downstream of PTCH1. Plays an important role in the regulation of centriole duplication. Required for the onset of procentriole formation and proper mitotic progression. During procentriole formation, is essential for the correct loading of SASS6 and CPAP to the base of the procentriole to initiate procentriole assembly. In complex with STIL acts as a modulator of PLK4-driven cytoskeletal rearrangements and directional cell motility. The chain is SCL-interrupting locus protein (STIL) from Homo sapiens (Human).